The sequence spans 225 residues: Uridylate kinase (225 aa).

An ATP-binding site is contributed by 9–10; sequence GS. A UMP-binding site is contributed by glycine 46. Glycine 47 and arginine 51 together coordinate ATP. Residues aspartate 67 and 115–121 each bind UMP; that span reads THPAHTT. Positions 141, 142, 147, and 150 each coordinate ATP.

The protein belongs to the UMP kinase family. In terms of assembly, homohexamer.

It is found in the cytoplasm. The enzyme catalyses UMP + ATP = UDP + ADP. It participates in pyrimidine metabolism; CTP biosynthesis via de novo pathway; UDP from UMP (UMPK route): step 1/1. Its activity is regulated as follows. Inhibited by UTP. Functionally, catalyzes the reversible phosphorylation of UMP to UDP. The sequence is that of Uridylate kinase from Methanococcus maripaludis (strain DSM 14266 / JCM 13030 / NBRC 101832 / S2 / LL).